The following is a 218-amino-acid chain: 3-dehydroquinate dehydratase (218 aa).

3-dehydroquinate-binding positions include 29–31 (EFR) and R56. H116 serves as the catalytic Proton donor/acceptor. K142 serves as the catalytic Schiff-base intermediate with substrate. Residues R180, S200, and Q204 each coordinate 3-dehydroquinate.

The protein belongs to the type-I 3-dehydroquinase family. As to quaternary structure, homodimer.

The catalysed reaction is 3-dehydroquinate = 3-dehydroshikimate + H2O. It participates in metabolic intermediate biosynthesis; chorismate biosynthesis; chorismate from D-erythrose 4-phosphate and phosphoenolpyruvate: step 3/7. Involved in the third step of the chorismate pathway, which leads to the biosynthesis of aromatic amino acids. Catalyzes the cis-dehydration of 3-dehydroquinate (DHQ) and introduces the first double bond of the aromatic ring to yield 3-dehydroshikimate. The polypeptide is 3-dehydroquinate dehydratase (Methanococcus maripaludis (strain C7 / ATCC BAA-1331)).